A 729-amino-acid polypeptide reads, in one-letter code: Fatty acid oxidation complex subunit alpha (729 aa).

The enoyl-CoA hydratase/isomerase stretch occupies residues 1–189 (MLYKGDTLYL…KIGLVDGVVK (189 aa)). Substrate is bound at residue Asp296. Residues 311-729 (ETPKQAAVLG…ARPVGSLKTA (419 aa)) are 3-hydroxyacyl-CoA dehydrogenase. NAD(+) is bound by residues Met324, Asp343, 400-402 (VVE), Lys407, and Ser429. Catalysis depends on His450, which acts as the For 3-hydroxyacyl-CoA dehydrogenase activity. Asn453 is an NAD(+) binding site. 2 residues coordinate substrate: Asn500 and Tyr660. The interval 708-729 (RHNEPYYPPVEPARPVGSLKTA) is disordered.

The protein in the N-terminal section; belongs to the enoyl-CoA hydratase/isomerase family. This sequence in the C-terminal section; belongs to the 3-hydroxyacyl-CoA dehydrogenase family. As to quaternary structure, heterotetramer of two alpha chains (FadB) and two beta chains (FadA).

It carries out the reaction a (3S)-3-hydroxyacyl-CoA + NAD(+) = a 3-oxoacyl-CoA + NADH + H(+). The catalysed reaction is a (3S)-3-hydroxyacyl-CoA = a (2E)-enoyl-CoA + H2O. The enzyme catalyses a 4-saturated-(3S)-3-hydroxyacyl-CoA = a (3E)-enoyl-CoA + H2O. It catalyses the reaction (3S)-3-hydroxybutanoyl-CoA = (3R)-3-hydroxybutanoyl-CoA. It carries out the reaction a (3Z)-enoyl-CoA = a 4-saturated (2E)-enoyl-CoA. The catalysed reaction is a (3E)-enoyl-CoA = a 4-saturated (2E)-enoyl-CoA. It participates in lipid metabolism; fatty acid beta-oxidation. Functionally, involved in the aerobic and anaerobic degradation of long-chain fatty acids via beta-oxidation cycle. Catalyzes the formation of 3-oxoacyl-CoA from enoyl-CoA via L-3-hydroxyacyl-CoA. It can also use D-3-hydroxyacyl-CoA and cis-3-enoyl-CoA as substrate. This is Fatty acid oxidation complex subunit alpha from Salmonella agona (strain SL483).